Consider the following 113-residue polypeptide: Large ribosomal subunit protein bL17 (113 aa).

The protein belongs to the bacterial ribosomal protein bL17 family. Part of the 50S ribosomal subunit. Contacts protein L32.

In Clostridium botulinum (strain ATCC 19397 / Type A), this protein is Large ribosomal subunit protein bL17.